A 189-amino-acid polypeptide reads, in one-letter code: Peptidyl-tRNA hydrolase (189 aa).

Tyr-14 provides a ligand contact to tRNA. Residue His-19 is the Proton acceptor of the active site. 3 residues coordinate tRNA: Tyr-64, Asn-66, and Asn-112.

It belongs to the PTH family. Monomer.

Its subcellular location is the cytoplasm. The enzyme catalyses an N-acyl-L-alpha-aminoacyl-tRNA + H2O = an N-acyl-L-amino acid + a tRNA + H(+). In terms of biological role, hydrolyzes ribosome-free peptidyl-tRNAs (with 1 or more amino acids incorporated), which drop off the ribosome during protein synthesis, or as a result of ribosome stalling. Its function is as follows. Catalyzes the release of premature peptidyl moieties from peptidyl-tRNA molecules trapped in stalled 50S ribosomal subunits, and thus maintains levels of free tRNAs and 50S ribosomes. This Clostridium botulinum (strain Okra / Type B1) protein is Peptidyl-tRNA hydrolase.